The primary structure comprises 274 residues: uncharacterized protein (274 aa).

A signal peptide spans 1–21; sequence MRKLTLLPLLLIITGLLTVQA. Residues 249–266 traverse the membrane as a helical segment; the sequence is TSAFVILTASALIFIYLF.

It is found in the membrane. This is an uncharacterized protein from Archaeoglobus fulgidus (strain ATCC 49558 / DSM 4304 / JCM 9628 / NBRC 100126 / VC-16).